A 144-amino-acid polypeptide reads, in one-letter code: Putative pre-16S rRNA nuclease (144 aa).

It belongs to the YqgF nuclease family.

The protein resides in the cytoplasm. Could be a nuclease involved in processing of the 5'-end of pre-16S rRNA. This chain is Putative pre-16S rRNA nuclease, found in Prochlorococcus marinus (strain NATL1A).